Consider the following 630-residue polypeptide: MPEDSNTNDNNKRPLEDNNAVDGESDDDIGPMLPPPPGEDAPRKKKRTLAHEKLYLDQLPCADMYEKSYMHRDVLSQVAVTKKDFIITTSVDGHLKFWKKTASGIEFVKHYKSHLSSIVDISISANHELLATISDDTTLKVYDITNFDMINMIKLRYKPKSVCWIHQSGQAQALVAVSEADNSNIHIYDGHADGKPLHTLSKMHSKPVHIIEFNSRFNCVVSVDAIGMIEYWSPEAPFALPDNLDFELKSQTDLYEFRKKKSVPTCLTFSPDGLSFATMSFPDRQVRLFKFLRGKMFREYDESLQAVSEMQQAGTTIHHLDDMEFGRRLAVEKELEKSNQARFVNAVFDNSGNFIIYGSLLGVKIVNIRTNKVVCLLGKSESNRFVNVSLYQGAPKKKAVYTLAMIASENAALKESQELDPTLFCTAFNKNRFYMMTRREPFDDINQKAERDIFNEKPSREEQTVAATQERKQILGTSAIIRTTSGDIHMRLFPDAAPKAVENFTTHAKNGYYDNLIFHRVIKGFMIQTGCPFGDGTGGESIWGDDFEDEFSREFRHDRPYTVSMANAGPNTNGSQFFITVAPTTWLDNKHSVFGRVTAGMDVVHSIESAKVDKTNKPLDDIKIINIDIR.

The segment at 1 to 46 is disordered; it reads MPEDSNTNDNNKRPLEDNNAVDGESDDDIGPMLPPPPGEDAPRKKK. WD repeat units follow at residues 70–108, 113–152, 157–198, 203–242, and 258–301; these read MHRD…IEFV, SHLS…MINM, YKPK…KPLH, MHSK…ALPD, and RKKK…REYD. Residues 475-629 enclose the PPIase cyclophilin-type domain; sequence LGTSAIIRTT…DDIKIINIDI (155 aa).

It belongs to the cyclophilin-type PPIase family.

It carries out the reaction [protein]-peptidylproline (omega=180) = [protein]-peptidylproline (omega=0). Its function is as follows. PPIases accelerate the folding of proteins. It catalyzes the cis-trans isomerization of proline imidic peptide bonds in oligopeptides. The polypeptide is Peptidyl-prolyl cis-trans isomerase cyp15 (cyp15) (Rhizopus delemar (strain RA 99-880 / ATCC MYA-4621 / FGSC 9543 / NRRL 43880) (Mucormycosis agent)).